Reading from the N-terminus, the 216-residue chain is Ribonuclease HII (216 aa).

The RNase H type-2 domain maps to 28 to 216 (ACIAGIDEAG…GVKEYVRSEE (189 aa)). The a divalent metal cation site is built by aspartate 34, glutamate 35, and aspartate 126.

Belongs to the RNase HII family. Mn(2+) is required as a cofactor. Mg(2+) serves as cofactor.

Its subcellular location is the cytoplasm. It catalyses the reaction Endonucleolytic cleavage to 5'-phosphomonoester.. Functionally, endonuclease that specifically degrades the RNA of RNA-DNA hybrids. In Geotalea uraniireducens (strain Rf4) (Geobacter uraniireducens), this protein is Ribonuclease HII.